Consider the following 186-residue polypeptide: Ribosome-recycling factor (186 aa).

Belongs to the RRF family.

The protein resides in the cytoplasm. Functionally, responsible for the release of ribosomes from messenger RNA at the termination of protein biosynthesis. May increase the efficiency of translation by recycling ribosomes from one round of translation to another. The protein is Ribosome-recycling factor of Paracidovorax citrulli (strain AAC00-1) (Acidovorax citrulli).